The chain runs to 155 residues: V-type proton ATPase 16 kDa proteolipid subunit c (155 aa).

The Lumenal segment spans residues 1 to 10 (MSESKSGPEY). A helical transmembrane segment spans residues 11-33 (ASFFAVMGASAAMVFSALGAAYG). Topologically, residues 34-55 (TAKSGTGIAAMSVMRPEQIMKS) are cytoplasmic. A helical transmembrane segment spans residues 56–76 (IIPVVMAGIIAIYGLVVAVLI). At 77 to 92 (ANSLNDDISLYKSFLQ) the chain is on the lumenal side. The helical transmembrane segment at 93–114 (LGAGLSVGLSGLAAGFAIGIVG) threads the bilayer. Over 115–131 (DAGVRGTAQQPRLFVGM) the chain is Cytoplasmic. Residues 132-152 (ILILIFAEVLGLYGLIVALIL) traverse the membrane as a helical segment. Topologically, residues 153 to 155 (STK) are lumenal.

Belongs to the V-ATPase proteolipid subunit family. As to quaternary structure, V-ATPase is a heteromultimeric enzyme made up of two complexes: the ATP-hydrolytic V1 complex and the proton translocation V0 complex. The V1 complex consists of three catalytic AB heterodimers that form a heterohexamer, three peripheral stalks each consisting of EG heterodimers, one central rotor including subunits D and F, and the regulatory subunits C and H. The proton translocation complex V0 consists of the proton transport subunit a, a ring of proteolipid subunits c9c'', rotary subunit d, subunits e and f, and the accessory subunits ATP6AP1/Ac45 and ATP6AP2/PRR. Interacts with the V0 complex V-ATPase subunit a4 ATP6V0A4. Interacts with LASS2. Interacts with RNF182; this interaction leads to ubiquitination and degradation via the proteasome pathway. In terms of assembly, (Microbial infection) Interacts with HTLV-1 accessory protein p12I. Ubiquitinated by RNF182, leading to its degradation via the ubiquitin-proteasome pathway.

The protein resides in the cytoplasmic vesicle. Its subcellular location is the clathrin-coated vesicle membrane. The protein localises to the secretory vesicle. It is found in the synaptic vesicle membrane. Its function is as follows. Proton-conducting pore forming subunit of the V0 complex of vacuolar(H+)-ATPase (V-ATPase), a multisubunit enzyme composed of a peripheral complex (V1) that hydrolyzes ATP and a membrane integral complex (V0) that translocates protons. V-ATPase is responsible for acidifying and maintaining the pH of intracellular compartments, and in some cell types, it is targeted to the plasma membrane, where it is responsible for acidifying the extracellular environment. The chain is V-type proton ATPase 16 kDa proteolipid subunit c (ATP6V0C) from Homo sapiens (Human).